The primary structure comprises 418 residues: Serine hydroxymethyltransferase (418 aa).

Residues L121 and 125–127 (GHL) contribute to the (6S)-5,6,7,8-tetrahydrofolate site. K230 is subject to N6-(pyridoxal phosphate)lysine. Residue 355–357 (SPF) participates in (6S)-5,6,7,8-tetrahydrofolate binding.

The protein belongs to the SHMT family. Homodimer. The cofactor is pyridoxal 5'-phosphate.

It localises to the cytoplasm. It catalyses the reaction (6R)-5,10-methylene-5,6,7,8-tetrahydrofolate + glycine + H2O = (6S)-5,6,7,8-tetrahydrofolate + L-serine. Its pathway is one-carbon metabolism; tetrahydrofolate interconversion. The protein operates within amino-acid biosynthesis; glycine biosynthesis; glycine from L-serine: step 1/1. In terms of biological role, catalyzes the reversible interconversion of serine and glycine with tetrahydrofolate (THF) serving as the one-carbon carrier. This reaction serves as the major source of one-carbon groups required for the biosynthesis of purines, thymidylate, methionine, and other important biomolecules. Also exhibits THF-independent aldolase activity toward beta-hydroxyamino acids, producing glycine and aldehydes, via a retro-aldol mechanism. The sequence is that of Serine hydroxymethyltransferase from Streptococcus pyogenes serotype M3 (strain ATCC BAA-595 / MGAS315).